The primary structure comprises 218 residues: DNA-directed RNA polymerase III subunit RPC7-like (218 aa).

The interval 130–218 (TIILPKRPPK…SDDNMDEAIY (89 aa)) is disordered. Residues 139–160 (KSTDDKEETIQKLETLEKKEEE) show a composition bias toward basic and acidic residues. 2 stretches are compositionally biased toward acidic residues: residues 161-193 (VTSEEDEEKEEEEEKEEGEEEEYDEEEHEEETD) and 201-218 (NGEDFGGDSDDNMDEAIY).

It belongs to the eukaryotic RPC7 RNA polymerase subunit family. In terms of assembly, component of the RNA polymerase III (Pol III) complex consisting of 17 subunits. Pol III exists as two alternative complexes defined by the mutually exclusive incorporation of subunit POLR3G/RPC7alpha or POLR3GL/RPC7beta. Found in a trimeric complex with POLR3C/RPC3 and POLR3F/RPC6. Directly interacts with POLR3C. As to expression, expressed in the liver.

It localises to the nucleus. In terms of biological role, DNA-dependent RNA polymerase catalyzes the transcription of DNA into RNA using the four ribonucleoside triphosphates as substrates. Specific peripheric component of RNA polymerase III which synthesizes small RNAs, such as 5S rRNA and tRNAs. The chain is DNA-directed RNA polymerase III subunit RPC7-like from Mus musculus (Mouse).